The chain runs to 380 residues: Cytochrome b (380 aa).

A run of 4 helical transmembrane segments spans residues 33–53 (FGSLLGACLIIQTITGLFLAM), 77–98 (WMIRHLHANGASMLFICLFLHI), 113–133 (WNIGIILLFMTMMTAFMGYVL), and 178–198 (FFTLHFMLPFIITALTTLHLL). Residues H83 and H97 each contribute to the heme b site. Positions 182 and 196 each coordinate heme b. H201 lines the a ubiquinone pocket. Transmembrane regions (helical) follow at residues 226-246 (IKDILGLLLFLLALMTLTLLS), 288-308 (LGGVMALMLSILILTTIPALH), 320-340 (LSQFLYWLLITDLLVLTWIGG), and 347-367 (FITIGQVASVLYFTTILLLMP).

Belongs to the cytochrome b family. The cytochrome bc1 complex contains 11 subunits: 3 respiratory subunits (MT-CYB, CYC1 and UQCRFS1), 2 core proteins (UQCRC1 and UQCRC2) and 6 low-molecular weight proteins (UQCRH/QCR6, UQCRB/QCR7, UQCRQ/QCR8, UQCR10/QCR9, UQCR11/QCR10 and a cleavage product of UQCRFS1). This cytochrome bc1 complex then forms a dimer. It depends on heme b as a cofactor.

The protein localises to the mitochondrion inner membrane. Functionally, component of the ubiquinol-cytochrome c reductase complex (complex III or cytochrome b-c1 complex) that is part of the mitochondrial respiratory chain. The b-c1 complex mediates electron transfer from ubiquinol to cytochrome c. Contributes to the generation of a proton gradient across the mitochondrial membrane that is then used for ATP synthesis. This chain is Cytochrome b (MT-CYB), found in Pongo pygmaeus (Bornean orangutan).